We begin with the raw amino-acid sequence, 431 residues long: Glutamate-1-semialdehyde 2,1-aminomutase (431 aa).

An N6-(pyridoxal phosphate)lysine modification is found at Lys-269.

This sequence belongs to the class-III pyridoxal-phosphate-dependent aminotransferase family. HemL subfamily. As to quaternary structure, homodimer. The cofactor is pyridoxal 5'-phosphate.

It is found in the cytoplasm. It carries out the reaction (S)-4-amino-5-oxopentanoate = 5-aminolevulinate. The protein operates within porphyrin-containing compound metabolism; protoporphyrin-IX biosynthesis; 5-aminolevulinate from L-glutamyl-tRNA(Glu): step 2/2. This Francisella tularensis subsp. tularensis (strain WY96-3418) protein is Glutamate-1-semialdehyde 2,1-aminomutase.